We begin with the raw amino-acid sequence, 322 residues long: 4-hydroxythreonine-4-phosphate dehydrogenase (322 aa).

Position 132 (Thr-132) interacts with substrate. Positions 160, 205, and 260 each coordinate a divalent metal cation. Positions 268, 277, and 286 each coordinate substrate.

This sequence belongs to the PdxA family. As to quaternary structure, homodimer. It depends on Zn(2+) as a cofactor. Mg(2+) is required as a cofactor. Co(2+) serves as cofactor.

It localises to the cytoplasm. The enzyme catalyses 4-(phosphooxy)-L-threonine + NAD(+) = 3-amino-2-oxopropyl phosphate + CO2 + NADH. It functions in the pathway cofactor biosynthesis; pyridoxine 5'-phosphate biosynthesis; pyridoxine 5'-phosphate from D-erythrose 4-phosphate: step 4/5. Its function is as follows. Catalyzes the NAD(P)-dependent oxidation of 4-(phosphooxy)-L-threonine (HTP) into 2-amino-3-oxo-4-(phosphooxy)butyric acid which spontaneously decarboxylates to form 3-amino-2-oxopropyl phosphate (AHAP). The sequence is that of 4-hydroxythreonine-4-phosphate dehydrogenase from Xanthomonas campestris pv. campestris (strain B100).